Consider the following 240-residue polypeptide: Phosphoenolpyruvate guanylyltransferase (240 aa).

Phosphoenolpyruvate is bound by residues threonine 161, glycine 178, and serine 181.

The protein belongs to the CofC family.

It catalyses the reaction phosphoenolpyruvate + GTP + H(+) = enolpyruvoyl-2-diphospho-5'-guanosine + diphosphate. It functions in the pathway cofactor biosynthesis; coenzyme F420 biosynthesis. In terms of biological role, guanylyltransferase that catalyzes the activation of phosphoenolpyruvate (PEP) as enolpyruvoyl-2-diphospho-5'-guanosine, via the condensation of PEP with GTP. It is involved in the biosynthesis of coenzyme F420, a hydride carrier cofactor. The polypeptide is Phosphoenolpyruvate guanylyltransferase (Rhodococcus opacus (strain B4)).